Consider the following 392-residue polypeptide: Extracellular metalloproteinase 4 (392 aa).

Residues 1–9 (VHSVVDYVS) constitute a propeptide that is removed on maturation. A glycan (N-linked (GlcNAc...) asparagine) is linked at Asn176. Residue His193 participates in Zn(2+) binding. Glu194 is an active-site residue. Position 197 (His197) interacts with Zn(2+). N-linked (GlcNAc...) asparagine glycans are attached at residues Asn359 and Asn385.

The protein belongs to the peptidase M36 family. Zn(2+) serves as cofactor.

It localises to the secreted. Its function is as follows. Secreted metalloproteinase probably acting as a virulence factor. The protein is Extracellular metalloproteinase 4 (MEP4) of Trichophyton soudanense.